We begin with the raw amino-acid sequence, 304 residues long: ULP1-interacting protein 4 (304 aa).

Residues 72–269 are disordered; sequence DEYPKEVDEH…SIVKEGDANT (198 aa). The segment covering 73–83 has biased composition (basic and acidic residues); the sequence is EYPKEVDEHSN. The span at 129–149 shows a compositional bias: polar residues; the sequence is TPSLKGNVTFPSPKTAISQDG. A Phosphoserine modification is found at serine 140. Positions 155-183 are enriched in basic and acidic residues; that stretch reads ETTRKERKYEHAPLNEVPVERDPKEENKE. Phosphoserine is present on residues serine 185 and serine 205.

As to quaternary structure, interacts with ULP1.

The protein localises to the endoplasmic reticulum membrane. It is found in the mitochondrion outer membrane. The protein resides in the nucleus envelope. The polypeptide is ULP1-interacting protein 4 (UIP4) (Saccharomyces cerevisiae (strain ATCC 204508 / S288c) (Baker's yeast)).